We begin with the raw amino-acid sequence, 257 residues long: 1-(5-phosphoribosyl)-5-[(5-phosphoribosylamino)methylideneamino] imidazole-4-carboxamide isomerase (257 aa).

Aspartate 8 serves as the catalytic Proton acceptor. Aspartate 129 functions as the Proton donor in the catalytic mechanism.

Belongs to the HisA/HisF family.

It is found in the cytoplasm. It catalyses the reaction 1-(5-phospho-beta-D-ribosyl)-5-[(5-phospho-beta-D-ribosylamino)methylideneamino]imidazole-4-carboxamide = 5-[(5-phospho-1-deoxy-D-ribulos-1-ylimino)methylamino]-1-(5-phospho-beta-D-ribosyl)imidazole-4-carboxamide. The protein operates within amino-acid biosynthesis; L-histidine biosynthesis; L-histidine from 5-phospho-alpha-D-ribose 1-diphosphate: step 4/9. This is 1-(5-phosphoribosyl)-5-[(5-phosphoribosylamino)methylideneamino] imidazole-4-carboxamide isomerase from Thermosynechococcus vestitus (strain NIES-2133 / IAM M-273 / BP-1).